A 158-amino-acid chain; its full sequence is Superoxide dismutase [Cu-Zn] (158 aa).

The Cu cation site is built by His-46, His-48, and His-63. An intrachain disulfide couples Cys-57 to Cys-149. Residues His-63, His-71, His-80, and Asp-83 each coordinate Zn(2+). His-120 contributes to the Cu cation binding site.

The protein belongs to the Cu-Zn superoxide dismutase family. In terms of assembly, homodimer. It depends on Cu cation as a cofactor. Requires Zn(2+) as cofactor.

It localises to the cytoplasm. It catalyses the reaction 2 superoxide + 2 H(+) = H2O2 + O2. Functionally, destroys radicals which are normally produced within the cells and which are toxic to biological systems. The sequence is that of Superoxide dismutase [Cu-Zn] (SODC) from Brugia pahangi (Filarial nematode worm).